We begin with the raw amino-acid sequence, 53 residues long: uncharacterized protein (53 aa).

Belongs to the ELIP/psbS family.

Its subcellular location is the plastid. It is found in the chloroplast. In terms of biological role, possible role in chlorophyll and/or carotenoid binding. This is an uncharacterized protein from Guillardia theta (Cryptophyte).